The primary structure comprises 445 residues: MLPWTALGLALSLRLALARSGAERGPPASAPRGDLMFLLDSSASVSHYEFSRVREFVGQLVAPLPLGTGALRASLVHVGSRPYTEFPFGQHSSGEAAQDAVRASAQRMGDTHTGLALVYAKEQLFAEASGARPGVPKVLVWVTDGGSSDPVGPPMQELKDLGVTVFIVSTGRGNFLELSAAASAPAEKHLHFVDVDDLHIIVQELRGSILDAMRPQQLHATEITSSGFRLAWPPLLTADSGYYVLELVPSAQPGAARRQQLPGNATDWIWAGLDPDTDYDVALVPESNVRLLRPQILRVRTRPGEAGPGASGPESGAGPAPTQLAALPAPEEAGPERIVISHARPRSLRVSWAPALGSAAALGYHVQFGPLRGGEAQRVEVPAGRNCTTLQGLAPGTAYLVTVTAAFRSGRESALSAKACTPDGPRPRPRPVPRAPTPGTASREP.

The first 22 residues, 1 to 22, serve as a signal peptide directing secretion; the sequence is MLPWTALGLALSLRLALARSGA. In terms of domain architecture, VWFA spans 34-213; sequence DLMFLLDSSA…ELRGSILDAM (180 aa). Phosphoserine; by FAM20C is present on residues S74 and S80. A Phosphotyrosine modification is found at Y83. S93 carries the phosphoserine; by FAM20C modification. Residues 214-304 form the Fibronectin type-III 1 domain; that stretch reads RPQQLHATEI…QILRVRTRPG (91 aa). N264 carries N-linked (GlcNAc...) asparagine glycosylation. 2 disordered regions span residues 302-325 and 411-445; these read RPGE…TQLA and RESA…SREP. Over residues 311-325 the composition is skewed to low complexity; that stretch reads SGPESGAGPAPTQLA. The Fibronectin type-III 2 domain maps to 334–427; sequence GPERIVISHA…KACTPDGPRP (94 aa).

Homodimer or homomultimer; disulfide-linked. Interacts with HSPG2. In terms of processing, N-glycosylated.

It is found in the secreted. Its subcellular location is the extracellular space. It localises to the extracellular matrix. The protein localises to the basement membrane. In terms of biological role, promotes matrix assembly. Involved in the organization of skeletal muscles and in the formation of neuromuscular junctions. This Homo sapiens (Human) protein is von Willebrand factor A domain-containing protein 1.